We begin with the raw amino-acid sequence, 553 residues long: COP9 signalosome complex subunit 10 (553 aa).

Residues 21–46 (AEMEEDSDEMGVYEEETSQGAEEEVP) show a composition bias toward acidic residues. The interval 21–47 (AEMEEDSDEMGVYEEETSQGAEEEVPL) is disordered. Residues 298–474 (LRTHFSACLQ…DYVYFGDEPR (177 aa)) enclose the PCI domain.

Component of a COP9 signalosome-like (CSN) complex.

It localises to the cytoplasm. Its subcellular location is the nucleus. Functionally, component of the COP9 signalosome (CSN) complex that acts as an regulator of the ubiquitin (Ubl) conjugation pathway by mediating the deneddylation of the cullin subunit of SCF-type E3 ubiquitin-protein ligase complexes. The CSN complex is involved in the regulation of the mating pheromone response. The chain is COP9 signalosome complex subunit 10 (RRI2) from Eremothecium gossypii (strain ATCC 10895 / CBS 109.51 / FGSC 9923 / NRRL Y-1056) (Yeast).